We begin with the raw amino-acid sequence, 241 residues long: Glycerol-3-phosphate acyltransferase (241 aa).

6 helical membrane passes run 3-23, 63-83, 97-117, 131-151, 156-176, and 198-218; these read ILYS…LLGS, IVFA…SAIV, YISP…PAYY, LIIS…LLVV, IVSL…WMPW, and LVNY…LVLV.

Belongs to the PlsY family. Probably interacts with PlsX.

It localises to the cell membrane. It carries out the reaction an acyl phosphate + sn-glycerol 3-phosphate = a 1-acyl-sn-glycero-3-phosphate + phosphate. It functions in the pathway lipid metabolism; phospholipid metabolism. Functionally, catalyzes the transfer of an acyl group from acyl-phosphate (acyl-PO(4)) to glycerol-3-phosphate (G3P) to form lysophosphatidic acid (LPA). This enzyme utilizes acyl-phosphate as fatty acyl donor, but not acyl-CoA or acyl-ACP. The sequence is that of Glycerol-3-phosphate acyltransferase from Mycoplasmopsis agalactiae (strain NCTC 10123 / CIP 59.7 / PG2) (Mycoplasma agalactiae).